The following is a 348-amino-acid chain: MSLLESISKNIYSLDNSSIEKTKQRLDRLIHPTGSLGKIEDICMQLAGIFGNENFDTSKKVIIAFAGDHGVYEEGVAPDPQNITKLQFPNFSKGLCGVGVISKFVGADVVAVDVGINCDEKLDGVLDYKIRKGTSNMAKGPAMSKQEAIRCLEIGIEIAEQCIEKDYKVIGIGEMGIANTTPSTAIISVISGCDPLEVTGIGAGLKKERLKHKAEVIRKAIEINNPNPTDGVDILSKVGGFEIGSMAGVILGCSANRIPVVIDGFISYAAALIAYKINPKTREYMIASHLSAESGTKRALDILKLDPLLNMDMRLGEGSGAALAFDIIEASNYTYKNMATFDEIDMGR.

The Proton acceptor role is filled by glutamate 317.

The protein belongs to the CobT family.

The enzyme catalyses 5,6-dimethylbenzimidazole + nicotinate beta-D-ribonucleotide = alpha-ribazole 5'-phosphate + nicotinate + H(+). It participates in nucleoside biosynthesis; alpha-ribazole biosynthesis; alpha-ribazole from 5,6-dimethylbenzimidazole: step 1/2. Functionally, catalyzes the synthesis of alpha-ribazole-5'-phosphate from nicotinate mononucleotide (NAMN) and 5,6-dimethylbenzimidazole (DMB). In Clostridioides difficile (strain 630) (Peptoclostridium difficile), this protein is Nicotinate-nucleotide--dimethylbenzimidazole phosphoribosyltransferase.